A 119-amino-acid polypeptide reads, in one-letter code: MVFGTGVDNVELSRIQKALTRSERFVEQVLTAVELEKYNSFQSTARKTEFLAGRWAAKEAFSKAYGTGFGKALGMHDLEIKNDELGKPFFTKHPFDGQVHLSISHSNLEAVAFVVLEKN.

Residues Asp-8 and Glu-59 each coordinate Mg(2+).

Belongs to the P-Pant transferase superfamily. AcpS family. The cofactor is Mg(2+).

The protein localises to the cytoplasm. It catalyses the reaction apo-[ACP] + CoA = holo-[ACP] + adenosine 3',5'-bisphosphate + H(+). Transfers the 4'-phosphopantetheine moiety from coenzyme A to a Ser of acyl-carrier-protein. The sequence is that of Holo-[acyl-carrier-protein] synthase from Lactococcus lactis subsp. lactis (strain IL1403) (Streptococcus lactis).